Reading from the N-terminus, the 321-residue chain is Glycerol-3-phosphate dehydrogenase [NAD(P)+] (321 aa).

6 residues coordinate NADPH: serine 10, tryptophan 11, arginine 31, arginine 32, tyrosine 47, and lysine 98. Residues lysine 98, glycine 125, and serine 127 each coordinate sn-glycerol 3-phosphate. An NADPH-binding site is contributed by alanine 129. Lysine 177, aspartate 230, serine 240, arginine 241, and asparagine 242 together coordinate sn-glycerol 3-phosphate. Lysine 177 serves as the catalytic Proton acceptor. Position 241 (arginine 241) interacts with NADPH. NADPH-binding residues include valine 265 and glutamate 267.

The protein belongs to the NAD-dependent glycerol-3-phosphate dehydrogenase family.

Its subcellular location is the cytoplasm. It catalyses the reaction sn-glycerol 3-phosphate + NAD(+) = dihydroxyacetone phosphate + NADH + H(+). It carries out the reaction sn-glycerol 3-phosphate + NADP(+) = dihydroxyacetone phosphate + NADPH + H(+). Its pathway is membrane lipid metabolism; glycerophospholipid metabolism. Catalyzes the reduction of the glycolytic intermediate dihydroxyacetone phosphate (DHAP) to sn-glycerol 3-phosphate (G3P), the key precursor for phospholipid synthesis. This chain is Glycerol-3-phosphate dehydrogenase [NAD(P)+], found in Thermotoga sp. (strain RQ2).